The following is a 538-amino-acid chain: Cytochrome P450 monooxygenase xanG (538 aa).

The chain crosses the membrane as a helical span at residues 44–64 (MILYYLASIPLAIICYLAWYL). The N-linked (GlcNAc...) asparagine glycan is linked to asparagine 378. Residue cysteine 489 participates in heme binding.

Belongs to the cytochrome P450 family. Heme is required as a cofactor.

The protein localises to the membrane. The protein operates within secondary metabolite biosynthesis. Functionally, cytochrome P450 monooxygenase; part of the gene cluster that mediates the biosynthesis of the isocyanide xanthocillin and its derivatives. The first step of the pathway consists in the conversion of tyrosine into a vinyl-isonitrile intermediate by the isocyanide synthase xanB. Subsequent oxidative dimerization of this intermediate to form xanthocillin may involve the cytochrome P450 monooxygenase xanG, whose expression is coregulated with that of XanB. Xanthocillin can be further modified by the isonitrile hydratase-like protein xanA which introduces N-formyl groups and the methyltransferase xanE which introduces methyl groups, leading to the production of several derivatives including fumiformamide. Finally, fumiformamide can be subject to both oxidative and reductive cyclization to yield melanocins E and F, respectively. In Aspergillus fumigatus (strain ATCC MYA-4609 / CBS 101355 / FGSC A1100 / Af293) (Neosartorya fumigata), this protein is Cytochrome P450 monooxygenase xanG.